A 226-amino-acid chain; its full sequence is ATP synthase subunit a (226 aa).

Helical transmembrane passes span 17–37 (FLFV…AKLA), 78–98 (LVAT…IPGF), 104–124 (NINF…FEGI), 175–195 (LFVW…GFAL), and 201–221 (FLQT…AVLL).

It belongs to the ATPase A chain family. In terms of assembly, F-type ATPases have 2 components, CF(1) - the catalytic core - and CF(0) - the membrane proton channel. CF(1) has five subunits: alpha(3), beta(3), gamma(1), delta(1), epsilon(1). CF(0) has three main subunits: a(1), b(2) and c(9-12). The alpha and beta chains form an alternating ring which encloses part of the gamma chain. CF(1) is attached to CF(0) by a central stalk formed by the gamma and epsilon chains, while a peripheral stalk is formed by the delta and b chains.

The protein localises to the cell inner membrane. Its function is as follows. Key component of the proton channel; it plays a direct role in the translocation of protons across the membrane. This Nitratiruptor sp. (strain SB155-2) protein is ATP synthase subunit a.